An 863-amino-acid polypeptide reads, in one-letter code: Eukaryotic translation initiation factor 3 subunit C (863 aa).

The tract at residues 1–92 (MSRFFRGGDD…VKSAKDKRFD (92 aa)) is disordered. Positions 16 to 53 (SSDEEELYSTSEEEEEEDQDQEESSEEEDEEESSDEDE) are enriched in acidic residues. Residues 79–92 (GATKVKSAKDKRFD) are compositionally biased toward basic and acidic residues. The PCI domain occupies 604–778 (FHMHINLELL…KTVIFRKGVE (175 aa)). The interval 808–863 (TQGSANAFSRKDGRQGGQRGGGQRSGRGGARAGGNAQRQAGGTQFTGGALGAAVRG) is disordered. Residues 822 to 839 (QGGQRGGGQRSGRGGARA) show a composition bias toward gly residues. Over residues 840–850 (GGNAQRQAGGT) the composition is skewed to low complexity.

The protein belongs to the eIF-3 subunit C family. As to quaternary structure, component of the eukaryotic translation initiation factor 3 (eIF-3) complex.

The protein localises to the cytoplasm. Functionally, component of the eukaryotic translation initiation factor 3 (eIF-3) complex, which is involved in protein synthesis of a specialized repertoire of mRNAs and, together with other initiation factors, stimulates binding of mRNA and methionyl-tRNAi to the 40S ribosome. The eIF-3 complex specifically targets and initiates translation of a subset of mRNAs involved in cell proliferation. This Chaetomium globosum (strain ATCC 6205 / CBS 148.51 / DSM 1962 / NBRC 6347 / NRRL 1970) (Soil fungus) protein is Eukaryotic translation initiation factor 3 subunit C.